We begin with the raw amino-acid sequence, 396 residues long: 1-deoxy-D-xylulose 5-phosphate reductoisomerase (396 aa).

Positions 10, 11, 12, 13, 38, and 123 each coordinate NADPH. Lysine 124 contributes to the 1-deoxy-D-xylulose 5-phosphate binding site. Glutamate 125 provides a ligand contact to NADPH. Mn(2+) is bound at residue aspartate 149. Residues serine 150, glutamate 151, serine 185, and histidine 208 each coordinate 1-deoxy-D-xylulose 5-phosphate. Glutamate 151 contacts Mn(2+). Glycine 214 serves as a coordination point for NADPH. 1-deoxy-D-xylulose 5-phosphate-binding residues include serine 221, asparagine 226, lysine 227, and glutamate 230. Glutamate 230 contributes to the Mn(2+) binding site.

It belongs to the DXR family. The cofactor is Mg(2+). It depends on Mn(2+) as a cofactor.

It carries out the reaction 2-C-methyl-D-erythritol 4-phosphate + NADP(+) = 1-deoxy-D-xylulose 5-phosphate + NADPH + H(+). Its pathway is isoprenoid biosynthesis; isopentenyl diphosphate biosynthesis via DXP pathway; isopentenyl diphosphate from 1-deoxy-D-xylulose 5-phosphate: step 1/6. In terms of biological role, catalyzes the NADPH-dependent rearrangement and reduction of 1-deoxy-D-xylulose-5-phosphate (DXP) to 2-C-methyl-D-erythritol 4-phosphate (MEP). The polypeptide is 1-deoxy-D-xylulose 5-phosphate reductoisomerase (Shewanella halifaxensis (strain HAW-EB4)).